A 340-amino-acid chain; its full sequence is Porphobilinogen deaminase (340 aa).

Cysteine 258 carries the S-(dipyrrolylmethanemethyl)cysteine modification.

This sequence belongs to the HMBS family. Requires dipyrromethane as cofactor.

The enzyme catalyses 4 porphobilinogen + H2O = hydroxymethylbilane + 4 NH4(+). The protein operates within porphyrin-containing compound metabolism; protoporphyrin-IX biosynthesis; coproporphyrinogen-III from 5-aminolevulinate: step 2/4. Functionally, tetrapolymerization of the monopyrrole PBG into the hydroxymethylbilane pre-uroporphyrinogen in several discrete steps. This chain is Porphobilinogen deaminase (HEM3), found in Candida albicans (strain SC5314 / ATCC MYA-2876) (Yeast).